Consider the following 428-residue polypeptide: GTPase Obg (428 aa).

Residues 1–158 (MFIDKAKVFI…LSIVLELKLL (158 aa)) form the Obg domain. The OBG-type G domain occupies 159–331 (ADVGLLGFPN…VIKEAARMLK (173 aa)). GTP contacts are provided by residues 165 to 172 (GFPNVGKS), 190 to 194 (FTTLK), 212 to 215 (DIPG), 282 to 285 (NKSD), and 312 to 314 (SAA). 2 residues coordinate Mg(2+): Ser172 and Thr192. An OCT domain is found at 345–428 (MYIPEEKRFT…LNDFEFEYLL (84 aa)).

It belongs to the TRAFAC class OBG-HflX-like GTPase superfamily. OBG GTPase family. In terms of assembly, monomer. Mg(2+) is required as a cofactor.

It localises to the cytoplasm. An essential GTPase which binds GTP, GDP and possibly (p)ppGpp with moderate affinity, with high nucleotide exchange rates and a fairly low GTP hydrolysis rate. Plays a role in control of the cell cycle, stress response, ribosome biogenesis and in those bacteria that undergo differentiation, in morphogenesis control. The sequence is that of GTPase Obg from Clostridium botulinum (strain Eklund 17B / Type B).